Consider the following 205-residue polypeptide: Imidazole glycerol phosphate synthase subunit HisH (205 aa).

The region spanning 1 to 205 is the Glutamine amidotransferase type-1 domain; that stretch reads MITIVDYQMG…RFATAPVEVA (205 aa). The Nucleophile role is filled by cysteine 79. Catalysis depends on residues histidine 182 and glutamate 184.

As to quaternary structure, heterodimer of HisH and HisF.

It localises to the cytoplasm. It carries out the reaction 5-[(5-phospho-1-deoxy-D-ribulos-1-ylimino)methylamino]-1-(5-phospho-beta-D-ribosyl)imidazole-4-carboxamide + L-glutamine = D-erythro-1-(imidazol-4-yl)glycerol 3-phosphate + 5-amino-1-(5-phospho-beta-D-ribosyl)imidazole-4-carboxamide + L-glutamate + H(+). The catalysed reaction is L-glutamine + H2O = L-glutamate + NH4(+). The protein operates within amino-acid biosynthesis; L-histidine biosynthesis; L-histidine from 5-phospho-alpha-D-ribose 1-diphosphate: step 5/9. In terms of biological role, IGPS catalyzes the conversion of PRFAR and glutamine to IGP, AICAR and glutamate. The HisH subunit catalyzes the hydrolysis of glutamine to glutamate and ammonia as part of the synthesis of IGP and AICAR. The resulting ammonia molecule is channeled to the active site of HisF. The chain is Imidazole glycerol phosphate synthase subunit HisH from Rhodopirellula baltica (strain DSM 10527 / NCIMB 13988 / SH1).